Here is a 54-residue protein sequence, read N- to C-terminus: Ovomucoid (54 aa).

One can recognise a Kazal-like domain in the interval 4–54 (VDCSDYPKPACSLDYMPLCGSDSKTYSNKCNFCNAVVDSNGTLTLSHFEKC). 3 disulfide bridges follow: Cys-6/Cys-36, Cys-14/Cys-33, and Cys-22/Cys-54. Residue Asn-43 is glycosylated (N-linked (GlcNAc...) asparagine).

It is found in the secreted. The protein is Ovomucoid of Chroicocephalus ridibundus (Black-headed gull).